The following is a 430-amino-acid chain: Retinoic acid receptor RXR-alpha-A (430 aa).

Positions 1–20 (MHPSLLSPTSLGPSGSLHSP) are enriched in low complexity. 2 disordered regions span residues 1–25 (MHPSLLSPTSLGPSGSLHSPISTLS) and 48–73 (ASPGVGYGPSISPQLNSHMNSVSSSE). Residues 1–99 (MHPSLLSPTS…QPSGTPLSLT (99 aa)) form a modulating region. Polar residues predominate over residues 58–72 (ISPQLNSHMNSVSSS). A DNA-binding region (nuclear receptor) is located at residues 100–175 (KHICAICGDR…MGMKREAVQE (76 aa)). 4 residues coordinate Zn(2+): Cys103, Cys106, Cys120, and Cys123. The NR C4-type zinc finger occupies 103–123 (CAICGDRSSGKHYGVYSCEGC). The interval 128-133 (KRTVRK) is nuclear localization signal. 4 residues coordinate Zn(2+): Cys139, Cys145, Cys155, and Cys158. The NR C4-type zinc-finger motif lies at 139-158 (CRDNKDCVIDKRQRNRCQYC). Residues 174 to 186 (QEERQRAKERSEN) show a composition bias toward basic and acidic residues. Residues 174–196 (QEERQRAKERSENEVESTSSANE) form a disordered region. The interval 176-192 (ERQRAKERSENEVESTS) is hinge. In terms of domain architecture, NR LBD spans 195 to 426 (NEDMPVEKIL…TFLMEMLEAP (232 aa)). 9-cis-retinoate-binding residues include Arg284 and Ala295. All-trans-retinoate is bound by residues Arg284 and Ala295. The segment at 316 to 336 (RVLTELVSKMRDMQMDKTELG) is required for nuclear export. Residues 415–426 (IDTFLMEMLEAP) form an AF-2 region.

This sequence belongs to the nuclear hormone receptor family. NR2 subfamily. Homodimer. Heterodimer; with a rar molecule. Binds DNA preferentially as a rar/rxr heterodimer.

It is found in the nucleus. Functionally, receptor for retinoic acid that acts as a transcription factor. Forms homo- or heterodimers with retinoic acid receptors (rars) and binds to target response elements in response to their ligands, all-trans or 9-cis retinoic acid, to regulate gene expression in various biological processes. The rar/rxr heterodimers bind to the retinoic acid response elements (RARE) composed of tandem 5'-AGGTCA-3' sites known as DR1-DR5 to regulate transcription. The high affinity ligand for rxrs is 9-cis retinoic acid. In the absence of ligand, the rar/rxr heterodimers associate with a multiprotein complex containing transcription corepressors that induce histone deacetylation, chromatin condensation and transcriptional suppression. On ligand binding, the corepressors dissociate from the receptors and coactivators are recruited leading to transcriptional activation. This is Retinoic acid receptor RXR-alpha-A from Danio rerio (Zebrafish).